We begin with the raw amino-acid sequence, 638 residues long: Probable beta-glucosidase C (638 aa).

An N-terminal signal peptide occupies residues 1–18 (MKVLAPGYLAEASLTALA). N40, N94, N116, N223, and N274 each carry an N-linked (GlcNAc...) asparagine glycan. Residue D341 is part of the active site. Residues N364, N480, N488, and N528 are each glycosylated (N-linked (GlcNAc...) asparagine).

It belongs to the glycosyl hydrolase 3 family.

It is found in the secreted. The catalysed reaction is Hydrolysis of terminal, non-reducing beta-D-glucosyl residues with release of beta-D-glucose.. It participates in glycan metabolism; cellulose degradation. Its function is as follows. Beta-glucosidases are one of a number of cellulolytic enzymes involved in the degradation of cellulosic biomass. Catalyzes the last step releasing glucose from the inhibitory cellobiose. This chain is Probable beta-glucosidase C (bglC), found in Aspergillus oryzae (strain ATCC 42149 / RIB 40) (Yellow koji mold).